A 957-amino-acid polypeptide reads, in one-letter code: Bifunctional glutamine synthetase adenylyltransferase/adenylyl-removing enzyme (957 aa).

Residues 1-447 (MFSQLDFTGL…IFNQLIGEEE (447 aa)) form an adenylyl removase region. Positions 454 to 957 (VNEQLAIWQD…IWQQIFTDNE (504 aa)) are adenylyl transferase.

This sequence belongs to the GlnE family. The cofactor is Mg(2+).

It catalyses the reaction [glutamine synthetase]-O(4)-(5'-adenylyl)-L-tyrosine + phosphate = [glutamine synthetase]-L-tyrosine + ADP. The catalysed reaction is [glutamine synthetase]-L-tyrosine + ATP = [glutamine synthetase]-O(4)-(5'-adenylyl)-L-tyrosine + diphosphate. Its function is as follows. Involved in the regulation of glutamine synthetase GlnA, a key enzyme in the process to assimilate ammonia. When cellular nitrogen levels are high, the C-terminal adenylyl transferase (AT) inactivates GlnA by covalent transfer of an adenylyl group from ATP to specific tyrosine residue of GlnA, thus reducing its activity. Conversely, when nitrogen levels are low, the N-terminal adenylyl removase (AR) activates GlnA by removing the adenylyl group by phosphorolysis, increasing its activity. The regulatory region of GlnE binds the signal transduction protein PII (GlnB) which indicates the nitrogen status of the cell. In Haemophilus ducreyi (strain 35000HP / ATCC 700724), this protein is Bifunctional glutamine synthetase adenylyltransferase/adenylyl-removing enzyme.